Reading from the N-terminus, the 31-residue chain is Dermaseptin-DI3 (31 aa).

The protein belongs to the frog skin active peptide (FSAP) family. Dermaseptin subfamily. As to expression, expressed by the skin glands.

The protein localises to the secreted. Its function is as follows. Antibacterial activity against Gram-positive bacteria S.aureus and E.faecalis, and Gram-negative bacteria P.aeruginosa and E.coli. This chain is Dermaseptin-DI3, found in Phyllomedusa distincta (Monkey frog).